Reading from the N-terminus, the 683-residue chain is Transforming growth factor-beta-induced protein ig-h3 (683 aa).

A signal peptide spans 1–23; it reads MALFVRLLALALALALGPAATLA. The residue at position 37 (Ser-37) is a Phosphoserine. Positions 45-99 constitute an EMI domain; sequence GPNVCAVQKVIGTNRKYFTNCKQWYQRKICGKSTVISYECCPGYEKVPGERSCPA. 5 cysteine pairs are disulfide-bonded: Cys-49-Cys-85, Cys-74-Cys-339, Cys-84-Cys-97, Cys-214-Cys-317, and Cys-473-Cys-478. S-cysteinyl cysteine is present on Cys-65. FAS1 domains are found at residues 103–236, 240–371, 375–498, and 502–632; these read LANL…DKVI, TNNI…DELL, SAKT…DRML, and SGTV…TSVL. The Cell attachment site signature appears at 642–644; that stretch reads RGD.

In terms of assembly, binds to type I, II, and IV collagens. Post-translationally, gamma-carboxylation is controversial. Gamma-carboxyglutamated; gamma-carboxyglutamate residues are formed by vitamin K dependent carboxylation; this may be required for calcium binding. According to a more recent report, does not contain vitamin K-dependent gamma-carboxyglutamate residues. In terms of processing, the EMI domain contains 2 expected intradomain disulfide bridges (Cys-49-Cys85 and Cys-84-Cys-97) and one unusual interdomain disulfide bridge to the second FAS1 domain (Cys-74-Cys-339). This arrangement violates the predicted disulfide bridge pattern of an EMI domain. In terms of tissue distribution, located primarily in the epithelium of normal adult cornea, in fetal stromal cells, and both endothelium- and stroma-derived cells in healing corneal wounds. Not expressed in normal adult endothelium and stroma.

The protein localises to the secreted. Its subcellular location is the extracellular space. It is found in the extracellular matrix. Functionally, plays a role in cell adhesion. May play a role in cell-collagen interactions. In Oryctolagus cuniculus (Rabbit), this protein is Transforming growth factor-beta-induced protein ig-h3 (TGFBI).